The sequence spans 232 residues: Small ribosomal subunit protein uS3 (232 aa).

One can recognise a KH type-2 domain in the interval 39–107; that stretch reads VRQYLTKELK…PAQINIAEVR (69 aa).

The protein belongs to the universal ribosomal protein uS3 family. In terms of assembly, part of the 30S ribosomal subunit. Forms a tight complex with proteins S10 and S14.

Functionally, binds the lower part of the 30S subunit head. Binds mRNA in the 70S ribosome, positioning it for translation. In Aliivibrio fischeri (strain MJ11) (Vibrio fischeri), this protein is Small ribosomal subunit protein uS3.